We begin with the raw amino-acid sequence, 316 residues long: N-acetyl-gamma-glutamyl-phosphate reductase (316 aa).

Residue cysteine 136 is part of the active site.

It belongs to the NAGSA dehydrogenase family. Type 1 subfamily.

It is found in the cytoplasm. It carries out the reaction N-acetyl-L-glutamate 5-semialdehyde + phosphate + NADP(+) = N-acetyl-L-glutamyl 5-phosphate + NADPH + H(+). Its pathway is amino-acid biosynthesis; L-arginine biosynthesis; N(2)-acetyl-L-ornithine from L-glutamate: step 3/4. In terms of biological role, catalyzes the NADPH-dependent reduction of N-acetyl-5-glutamyl phosphate to yield N-acetyl-L-glutamate 5-semialdehyde. The chain is N-acetyl-gamma-glutamyl-phosphate reductase from Xanthomonas axonopodis pv. citri (strain 306).